A 140-amino-acid polypeptide reads, in one-letter code: Large ribosomal subunit protein uL14 (140 aa).

Belongs to the universal ribosomal protein uL14 family. In terms of assembly, component of the large ribosomal subunit.

The protein localises to the cytoplasm. Its function is as follows. Component of the large ribosomal subunit. The ribosome is a large ribonucleoprotein complex responsible for the synthesis of proteins in the cell. This chain is Large ribosomal subunit protein uL14 (rpl23), found in Danio rerio (Zebrafish).